We begin with the raw amino-acid sequence, 744 residues long: Cytoskeleton-associated protein 2-like (744 aa).

Disordered regions lie at residues 35–56 (YLKA…GPKK), 76–169 (LQSR…THVE), 182–216 (KENL…SSLA), 317–337 (TVTE…VLQG), and 428–452 (NKTA…GAQT). Composition is skewed to polar residues over residues 76 to 86 (LQSRPANITRS), 102 to 129 (SESV…STDG), and 137 to 154 (GSLN…VTDQ). Residue Lys195 forms a Glycyl lysine isopeptide (Lys-Gly) (interchain with G-Cter in SUMO1); alternate linkage. Lys195 is covalently cross-linked (Glycyl lysine isopeptide (Lys-Gly) (interchain with G-Cter in SUMO2); alternate). Over residues 199 to 216 (ESWTINKPQTNQTKSSLA) the composition is skewed to polar residues. At Ser744 the chain carries Phosphoserine.

Belongs to the CKAP2 family. Post-translationally, ubiquitinated by the anaphase promoting complex/cyclosome (APC/C).

The protein localises to the cytoplasm. The protein resides in the cytoskeleton. Its subcellular location is the spindle pole. Microtubule-associated protein required for mitotic spindle formation and cell-cycle progression in neural progenitor cells. This Bos taurus (Bovine) protein is Cytoskeleton-associated protein 2-like (CKAP2L).